Here is a 365-residue protein sequence, read N- to C-terminus: Chorismate synthase (365 aa).

An NADP(+)-binding site is contributed by arginine 46. FMN is bound by residues 124 to 126 (RAS), glycine 284, 299 to 303 (KPTPS), and arginine 326.

Belongs to the chorismate synthase family. It depends on FMNH2 as a cofactor.

It catalyses the reaction 5-O-(1-carboxyvinyl)-3-phosphoshikimate = chorismate + phosphate. The protein operates within metabolic intermediate biosynthesis; chorismate biosynthesis; chorismate from D-erythrose 4-phosphate and phosphoenolpyruvate: step 7/7. Functionally, catalyzes the anti-1,4-elimination of the C-3 phosphate and the C-6 proR hydrogen from 5-enolpyruvylshikimate-3-phosphate (EPSP) to yield chorismate, which is the branch point compound that serves as the starting substrate for the three terminal pathways of aromatic amino acid biosynthesis. This reaction introduces a second double bond into the aromatic ring system. The sequence is that of Chorismate synthase from Pyrobaculum islandicum (strain DSM 4184 / JCM 9189 / GEO3).